A 1203-amino-acid chain; its full sequence is Protein patched homolog 2 (1203 aa).

Residues 1–57 (MTRSPPLRELPPSYTPPARTAAPQILAGSLKAPLWLRAYFQGLLFSLGCGIQRHCGK) are Cytoplasmic-facing. Residues 58–78 (VLFLGLLAFGALALGLRMAII) traverse the membrane as a helical segment. The Extracellular segment spans residues 79-392 (ETNLEQLWVE…LDDILHAFSE (314 aa)). N370 carries N-linked (GlcNAc...) asparagine glycosylation. The helical transmembrane segment at 393–413 (VSAARVVGGYLLMLAYACVTM) threads the bilayer. In terms of domain architecture, SSD spans 394–552 (SAARVVGGYL…MLVFPAILSL (159 aa)). Over 414–428 (LRWDCAQSQGSVGLA) the chain is Cytoplasmic. The chain crosses the membrane as a helical span at residues 429–449 (GVLLVALAVASGLGLCALLGI). Residues 450–457 (TFNAATTQ) lie on the Extracellular side of the membrane. Residues 458-478 (VLPFLALGIGVDDVFLLAHAF) form a helical membrane-spanning segment. Over 479-501 (TEALPGTPLQERMGECLQRTGTS) the chain is Cytoplasmic. A helical transmembrane segment spans residues 502-522 (VVLTSINNMAAFLMAALVPIP). Topologically, residues 523–531 (ALRAFSLQA) are extracellular. A helical transmembrane segment spans residues 532-552 (AIVVGCTFVAVMLVFPAILSL). The Cytoplasmic segment spans residues 553–686 (DLRRRHCQRL…APLLLQSHAK (134 aa)). The chain crosses the membrane as a helical span at residues 687 to 707 (AIVLVLFGALLGLSLYGATLV). At 708-963 (QDGLALTDVV…WEQYLGLRRC (256 aa)) the chain is on the extracellular side. A glycan (N-linked (GlcNAc...) asparagine) is linked at N812. Residues 964 to 984 (FLLAVCILLVCTFLVCALLLL) traverse the membrane as a helical segment. Topologically, residues 985-991 (NPWTAGL) are cytoplasmic. A helical transmembrane segment spans residues 992–1012 (IVLVLAMMTVELFGIMGFLGI). Position 1013 (K1013) is a topological domain, extracellular. The chain crosses the membrane as a helical span at residues 1014–1034 (LSAIPVVILVASVGIGVEFTV). Residues 1035 to 1064 (HVALGFLTTQGSRNLRAAHALEHTFAPVTD) are Cytoplasmic-facing. A helical transmembrane segment spans residues 1065–1085 (GAISTLLGLLMLAGSHFDFIV). Residues 1086-1093 (RYFFAALT) are Extracellular-facing. The chain crosses the membrane as a helical span at residues 1094-1114 (VLTLLGLLHGLVLLPVLLSIL). Topologically, residues 1115–1203 (GPPPEVIQMY…SSRGPGPATG (89 aa)) are cytoplasmic. Positions 1171–1203 (GAYIHPAPDEPPWSPAATSSGNLSSRGPGPATG) are disordered. Residues 1186–1195 (AATSSGNLSS) are compositionally biased toward polar residues.

The protein belongs to the patched family.

The protein localises to the membrane. Its function is as follows. Plays a role in the control of cellular growth. May have a role in epidermal development. May act as a receptor for Sonic hedgehog (SHH). This is Protein patched homolog 2 (PTCH2) from Homo sapiens (Human).